Here is a 1083-residue protein sequence, read N- to C-terminus: Error-prone DNA polymerase (1083 aa).

It belongs to the DNA polymerase type-C family. DnaE2 subfamily.

The protein resides in the cytoplasm. It carries out the reaction DNA(n) + a 2'-deoxyribonucleoside 5'-triphosphate = DNA(n+1) + diphosphate. In terms of biological role, DNA polymerase involved in damage-induced mutagenesis and translesion synthesis (TLS). It is not the major replicative DNA polymerase. The sequence is that of Error-prone DNA polymerase from Xanthomonas oryzae pv. oryzae (strain KACC10331 / KXO85).